An 85-amino-acid chain; its full sequence is Serine protease inhibitor Kazal-type 7 (85 aa).

An N-terminal signal peptide occupies residues 1-19; the sequence is MKITGGLLLLCTVVYFCSS. The region spanning 26–85 is the Kazal-like domain; sequence SPKKVDCSIYKKYPVVAIPCPITYLPVCGSDYITYGNECHLCTESLKSNGRVQFLHDGSC. 3 disulfide bridges follow: C32/C67, C45/C64, and C53/C85.

The protein localises to the secreted. Functionally, probable serine protease inhibitor. The chain is Serine protease inhibitor Kazal-type 7 (SPINK7) from Homo sapiens (Human).